The chain runs to 355 residues: Probable aldo-keto reductase 3 (355 aa).

Y70 serves as the catalytic Proton donor. Position 138 (H138) interacts with substrate. 217–227 (SPLGRGFFSSG) contributes to the NADP(+) binding site.

This sequence belongs to the aldo/keto reductase family.

The polypeptide is Probable aldo-keto reductase 3 (Oryza sativa subsp. japonica (Rice)).